The sequence spans 262 residues: Pyridoxine 5'-phosphate synthase (262 aa).

Residue N6 participates in 3-amino-2-oxopropyl phosphate binding. Position 8 to 9 (8 to 9 (DH)) interacts with 1-deoxy-D-xylulose 5-phosphate. R17 provides a ligand contact to 3-amino-2-oxopropyl phosphate. The Proton acceptor role is filled by H43. Residues R45 and H50 each coordinate 1-deoxy-D-xylulose 5-phosphate. The active-site Proton acceptor is E70. Residue T102 participates in 1-deoxy-D-xylulose 5-phosphate binding. H215 serves as the catalytic Proton donor. Residues G216 and 237-238 (GH) each bind 3-amino-2-oxopropyl phosphate.

Belongs to the PNP synthase family. In terms of assembly, homooctamer; tetramer of dimers.

The protein resides in the cytoplasm. It catalyses the reaction 3-amino-2-oxopropyl phosphate + 1-deoxy-D-xylulose 5-phosphate = pyridoxine 5'-phosphate + phosphate + 2 H2O + H(+). It participates in cofactor biosynthesis; pyridoxine 5'-phosphate biosynthesis; pyridoxine 5'-phosphate from D-erythrose 4-phosphate: step 5/5. Functionally, catalyzes the complicated ring closure reaction between the two acyclic compounds 1-deoxy-D-xylulose-5-phosphate (DXP) and 3-amino-2-oxopropyl phosphate (1-amino-acetone-3-phosphate or AAP) to form pyridoxine 5'-phosphate (PNP) and inorganic phosphate. In Helicobacter acinonychis (strain Sheeba), this protein is Pyridoxine 5'-phosphate synthase.